Consider the following 131-residue polypeptide: Small ribosomal subunit protein bS6 (131 aa).

The interval 98–131 is disordered; it reads EASPMARARDERDSRRGPAGERSYDEAHAEEIGE. Positions 104–131 are enriched in basic and acidic residues; it reads RARDERDSRRGPAGERSYDEAHAEEIGE.

Belongs to the bacterial ribosomal protein bS6 family.

Binds together with bS18 to 16S ribosomal RNA. In Shewanella putrefaciens (strain CN-32 / ATCC BAA-453), this protein is Small ribosomal subunit protein bS6.